We begin with the raw amino-acid sequence, 156 residues long: 6,7-dimethyl-8-ribityllumazine synthase (156 aa).

Residues Phe-22, 57–59 (AYE), and 81–83 (TVI) contribute to the 5-amino-6-(D-ribitylamino)uracil site. (2S)-2-hydroxy-3-oxobutyl phosphate is bound at residue 86 to 87 (GT). The active-site Proton donor is the His-89. Phe-114 is a 5-amino-6-(D-ribitylamino)uracil binding site. Arg-128 is a binding site for (2S)-2-hydroxy-3-oxobutyl phosphate.

This sequence belongs to the DMRL synthase family. In terms of assembly, forms an icosahedral capsid composed of 60 subunits, arranged as a dodecamer of pentamers.

It catalyses the reaction (2S)-2-hydroxy-3-oxobutyl phosphate + 5-amino-6-(D-ribitylamino)uracil = 6,7-dimethyl-8-(1-D-ribityl)lumazine + phosphate + 2 H2O + H(+). It functions in the pathway cofactor biosynthesis; riboflavin biosynthesis; riboflavin from 2-hydroxy-3-oxobutyl phosphate and 5-amino-6-(D-ribitylamino)uracil: step 1/2. In terms of biological role, catalyzes the formation of 6,7-dimethyl-8-ribityllumazine by condensation of 5-amino-6-(D-ribitylamino)uracil with 3,4-dihydroxy-2-butanone 4-phosphate. This is the penultimate step in the biosynthesis of riboflavin. The protein is 6,7-dimethyl-8-ribityllumazine synthase of Serratia proteamaculans (strain 568).